Reading from the N-terminus, the 798-residue chain is MEIRGALDLRKRQVLIFLVLLGLSRAGTESAHYSVAEETEIGSFVANLARDLGLGVEELSSREARVVSDDNKKYLHLDLLTGNLLLNEKLDRDELCGSTEPCVLHFQVVLENPLQFFRFELCVKDINDHSPTFLDKEILIKISEGTTVGATFLMESAQDLDVGSNSLQNYTISPNSHFYIKIPDSSDRKIYPELVLDRALDYEQEAELRLTLTAVDGGSPPKSGTTLVLIKVLDINDNAPEFPQSLYEVQVPEDRPLGSWIATISAKDLDAGNYGKISYTFFHASEDIRKTFEINPISGEVNLRSPLDFEVIQSYTINIQATDGGGLSGKCTLLVKVMDINDNPPEVTISSITKRIPENASETLVALFSILDQDSGDNGRMICSIQDNLPFFLKPTFKNFFTLVSEKALDRESQAEYNITITVTDLGTPRLKTEYNITVLLSDVNDNAPTFTQTSYTLFVRENNSPALHIGSVSATDRDSGTNAQVNYSLLPPQDRHLPLASLVSINADNGHLFALRSLDYEALQEFEFRVGATDRGSPALSSEALVRVLVLDANDNSPFVLYPLQNGSAPCTELVPRAAEPGYLVTKVVAVDGDSGQNAWLSYQLLKATEPGLFGVWAHNGEVRTARLLSERDAAKHRLVVLVKDNGEPPRSATATLHVLLVDGFSQPYLPLPEAAPAQAQADSLTVYLVVALASVSSLFLFSVLLFVAVRLCRRSRAASVGRCSVPEGPFPGHLVDVSGTGTLSQSYQYEVCLTGGSGTNEFKFLKPIIPNFQVHDTGRNMGEIENFRNSFGLNIQ.

The N-terminal stretch at 1–26 (MEIRGALDLRKRQVLIFLVLLGLSRA) is a signal peptide. The Extracellular portion of the chain corresponds to 27–686 (GTESAHYSVA…APAQAQADSL (660 aa)). 5 Cadherin domains span residues 35–133 (VAEE…SPTF), 138–242 (ILIK…APEF), 247–347 (YEVQ…PPEV), 352–451 (ITKR…APTF), and 456–561 (YTLF…SPFV). A disulfide bridge connects residues Cys-96 and Cys-102. N-linked (GlcNAc...) asparagine glycosylation is present at Asn-169. N-linked (GlcNAc...) asparagine glycans are attached at residues Asn-359, Asn-418, Asn-436, Asn-487, and Asn-567. The region spanning 568–671 (GSAPCTELVP…LVDGFSQPYL (104 aa)) is the Cadherin 6 domain. Residues 687 to 711 (TVYLVVALASVSSLFLFSVLLFVAV) traverse the membrane as a helical segment. At 712–798 (RLCRRSRAAS…FRNSFGLNIQ (87 aa)) the chain is on the cytoplasmic side.

The protein localises to the cell membrane. In terms of biological role, potential calcium-dependent cell-adhesion protein. May be involved in the establishment and maintenance of specific neuronal connections in the brain. The sequence is that of Protocadherin beta-14 (PCDHB14) from Homo sapiens (Human).